The sequence spans 361 residues: Holliday junction branch migration complex subunit RuvB (361 aa).

2 stretches are compositionally biased toward basic and acidic residues: residues 1 to 13 (MSDV…KLPE) and 33 to 43 (QGEHDIERSLR). The tract at residues 1–43 (MSDVERTEFKLPEGMDLSSPPQRNQDVDAAEQQGEHDIERSLR) is disordered. The interval 2–203 (SDVERTEFKL…FGFTAQMEYY (202 aa)) is large ATPase domain (RuvB-L). Residues leucine 42, arginine 43, glycine 84, lysine 87, threonine 88, threonine 89, 150 to 152 (EDF), arginine 193, tyrosine 203, and arginine 240 each bind ATP. Threonine 88 contacts Mg(2+). The interval 204 to 274 (DTEDLTRVIS…AAQAALRVFD (71 aa)) is small ATPAse domain (RuvB-S). The segment at 277–361 (ERGLDRLDRA…PEGAIGGTLF (85 aa)) is head domain (RuvB-H). Arginine 332 and arginine 337 together coordinate DNA.

Belongs to the RuvB family. As to quaternary structure, homohexamer. Forms an RuvA(8)-RuvB(12)-Holliday junction (HJ) complex. HJ DNA is sandwiched between 2 RuvA tetramers; dsDNA enters through RuvA and exits via RuvB. An RuvB hexamer assembles on each DNA strand where it exits the tetramer. Each RuvB hexamer is contacted by two RuvA subunits (via domain III) on 2 adjacent RuvB subunits; this complex drives branch migration. In the full resolvosome a probable DNA-RuvA(4)-RuvB(12)-RuvC(2) complex forms which resolves the HJ.

The protein resides in the cytoplasm. It catalyses the reaction ATP + H2O = ADP + phosphate + H(+). In terms of biological role, the RuvA-RuvB-RuvC complex processes Holliday junction (HJ) DNA during genetic recombination and DNA repair, while the RuvA-RuvB complex plays an important role in the rescue of blocked DNA replication forks via replication fork reversal (RFR). RuvA specifically binds to HJ cruciform DNA, conferring on it an open structure. The RuvB hexamer acts as an ATP-dependent pump, pulling dsDNA into and through the RuvAB complex. RuvB forms 2 homohexamers on either side of HJ DNA bound by 1 or 2 RuvA tetramers; 4 subunits per hexamer contact DNA at a time. Coordinated motions by a converter formed by DNA-disengaged RuvB subunits stimulates ATP hydrolysis and nucleotide exchange. Immobilization of the converter enables RuvB to convert the ATP-contained energy into a lever motion, pulling 2 nucleotides of DNA out of the RuvA tetramer per ATP hydrolyzed, thus driving DNA branch migration. The RuvB motors rotate together with the DNA substrate, which together with the progressing nucleotide cycle form the mechanistic basis for DNA recombination by continuous HJ branch migration. Branch migration allows RuvC to scan DNA until it finds its consensus sequence, where it cleaves and resolves cruciform DNA. The chain is Holliday junction branch migration complex subunit RuvB from Corynebacterium aurimucosum (strain ATCC 700975 / DSM 44827 / CIP 107346 / CN-1) (Corynebacterium nigricans).